An 867-amino-acid polypeptide reads, in one-letter code: Alanine--tRNA ligase (867 aa).

H556, H560, C658, and H662 together coordinate Zn(2+).

It belongs to the class-II aminoacyl-tRNA synthetase family. Zn(2+) serves as cofactor.

It is found in the cytoplasm. It carries out the reaction tRNA(Ala) + L-alanine + ATP = L-alanyl-tRNA(Ala) + AMP + diphosphate. In terms of biological role, catalyzes the attachment of alanine to tRNA(Ala) in a two-step reaction: alanine is first activated by ATP to form Ala-AMP and then transferred to the acceptor end of tRNA(Ala). Also edits incorrectly charged Ser-tRNA(Ala) and Gly-tRNA(Ala) via its editing domain. The polypeptide is Alanine--tRNA ligase (Fusobacterium nucleatum subsp. nucleatum (strain ATCC 25586 / DSM 15643 / BCRC 10681 / CIP 101130 / JCM 8532 / KCTC 2640 / LMG 13131 / VPI 4355)).